The sequence spans 159 residues: Phosphopantetheine adenylyltransferase (159 aa).

T10 serves as a coordination point for substrate. Residues T10–F11 and H18 contribute to the ATP site. Residues K42, M74, and R88 each contribute to the substrate site. Residues G89–R91, E99, and W124–S130 each bind ATP.

This sequence belongs to the bacterial CoaD family. Homohexamer. The cofactor is Mg(2+).

Its subcellular location is the cytoplasm. It catalyses the reaction (R)-4'-phosphopantetheine + ATP + H(+) = 3'-dephospho-CoA + diphosphate. It participates in cofactor biosynthesis; coenzyme A biosynthesis; CoA from (R)-pantothenate: step 4/5. Functionally, reversibly transfers an adenylyl group from ATP to 4'-phosphopantetheine, yielding dephospho-CoA (dPCoA) and pyrophosphate. The polypeptide is Phosphopantetheine adenylyltransferase (Yersinia pestis).